Reading from the N-terminus, the 309-residue chain is Ribosomal protein L11 methyltransferase (309 aa).

Residues T160, G181, D203, and N245 each coordinate S-adenosyl-L-methionine.

It belongs to the methyltransferase superfamily. PrmA family.

It localises to the cytoplasm. The catalysed reaction is L-lysyl-[protein] + 3 S-adenosyl-L-methionine = N(6),N(6),N(6)-trimethyl-L-lysyl-[protein] + 3 S-adenosyl-L-homocysteine + 3 H(+). Its function is as follows. Methylates ribosomal protein L11. The polypeptide is Ribosomal protein L11 methyltransferase (Caldanaerobacter subterraneus subsp. tengcongensis (strain DSM 15242 / JCM 11007 / NBRC 100824 / MB4) (Thermoanaerobacter tengcongensis)).